The sequence spans 98 residues: NADH-ubiquinone oxidoreductase chain 4L (98 aa).

Helical transmembrane passes span 1 to 21 (MPII…GMLT), 29 to 49 (SLLC…LMAL), and 58 to 78 (IVPI…LSLL).

This sequence belongs to the complex I subunit 4L family. Core subunit of respiratory chain NADH dehydrogenase (Complex I) which is composed of 45 different subunits.

Its subcellular location is the mitochondrion inner membrane. The enzyme catalyses a ubiquinone + NADH + 5 H(+)(in) = a ubiquinol + NAD(+) + 4 H(+)(out). In terms of biological role, core subunit of the mitochondrial membrane respiratory chain NADH dehydrogenase (Complex I) which catalyzes electron transfer from NADH through the respiratory chain, using ubiquinone as an electron acceptor. Part of the enzyme membrane arm which is embedded in the lipid bilayer and involved in proton translocation. This chain is NADH-ubiquinone oxidoreductase chain 4L (MT-ND4L), found in Presbytis melalophos (Mitred leaf monkey).